The following is a 771-amino-acid chain: Phosphoglycerate kinase (771 aa).

Positions 1–406 (MKKLITDLNL…PGIDAIQNYE (406 aa)) are phosphoglycerate kinase. Residues 20–22 (DLN), arginine 35, 58–61 (HLGR), arginine 118, and arginine 155 contribute to the substrate site. ATP contacts are provided by residues lysine 206, glycine 295, glutamate 334, and 361–364 (GGDS). The segment at 407-771 (QTYEQYDSQV…KRFWFFGRKR (365 aa)) is unknown.

It in the N-terminal section; belongs to the phosphoglycerate kinase family. In terms of assembly, monomer.

The protein resides in the cytoplasm. The enzyme catalyses (2R)-3-phosphoglycerate + ATP = (2R)-3-phospho-glyceroyl phosphate + ADP. It participates in carbohydrate degradation; glycolysis; pyruvate from D-glyceraldehyde 3-phosphate: step 2/5. This is Phosphoglycerate kinase (pgk) from Mycoplasmopsis pulmonis (strain UAB CTIP) (Mycoplasma pulmonis).